The chain runs to 489 residues: Occludin (489 aa).

At M1–R51 the chain is on the cytoplasmic side. An MARVEL domain is found at S45–H248. A helical membrane pass occupies residues I52–W74. Topologically, residues E75–R112 are extracellular. A helical membrane pass occupies residues A113–L137. Over S138–R147 the chain is Cytoplasmic. A helical transmembrane segment spans residues F148–V172. The Extracellular portion of the chain corresponds to G173–E222. Cysteines 196 and 216 form a disulfide. The helical transmembrane segment at A223–Q244 threads the bilayer. Residues K245–S489 lie on the Cytoplasmic side of the membrane. Residue S280 is modified to Phosphoserine. Phosphothreonine is present on T285. S300 is modified (phosphoserine). The interval P308–D382 is disordered. Positions P322–P332 are enriched in pro residues. The segment covering P345 to P354 has biased composition (basic residues). A phosphotyrosine mark is found at Y364 and Y368. The span at E365–E377 shows a compositional bias: polar residues. 2 positions are modified to phosphothreonine; by PKC/PRKCH: T369 and T370. At S374 the chain carries Phosphoserine. Positions D381 to S489 constitute an OCEL domain. A coiled-coil region spans residues L407 to L434. Phosphoserine is present on S457.

This sequence belongs to the ELL/occludin family. Interacts with TJP1/ZO1. Interacts with VAPA. Interacts with CLDN1, CLDN6, CLDN9, CLDN11, CLDN12 and CLDN17. Interacts with PLSCR1. Interacts with LSR, ILDR1 and ILDR2. Interacts with TJP2/ZO2. Post-translationally, dephosphorylated by PTPRJ. Localized at tight junctions of both epithelial and endothelial cells.

The protein resides in the cell membrane. It is found in the cell junction. It localises to the tight junction. Functionally, may play a role in the formation and regulation of the tight junction (TJ) paracellular permeability barrier. In Potorous tridactylus (Potoroo), this protein is Occludin (OCLN).